The primary structure comprises 57 residues: Small hydrophobic protein (57 aa).

Topologically, residues 1-8 (MPAIQPPL) are virion surface. A helical transmembrane segment spans residues 9–29 (YLTFLLLTLLYLIITLYVWTI). At 30-57 (LTINHNTAVRYAALYQRSFSRWGFDQSL) the chain is on the intravirion side.

This sequence belongs to the rubulavirus small hydrophobic protein family. Interacts with host TNFRSF1A, RIPK1 and IRAK1; these interactions interfere with host NF-kappa-B activation at the level of receptor complexes. Interacts with host protein UBQLN4.

The protein resides in the virion membrane. It localises to the host cell membrane. Its function is as follows. Plays a role in the inhibition of the host NF-kappa-B pathway. This inhibition occurs at the receptor level, by preventing the signaling of TNFR1 as well as IL-1R and TLR3. The polypeptide is Small hydrophobic protein (SH) (Mumps virus genotype A (strain Jeryl-Lynn) (MuV)).